Consider the following 148-residue polypeptide: MKVYLLQDLPGTGKKGQIVDVAEGYARNYLFKNNLAILADEKLIEQVKKREEREQRKEEERYQKALDLKKELEGKAVVVKAPGGETGKLYGAVTTRQIAHALKEQLKLEVDSKDINMPDPIKSVGVYDVDIHLFKDVWATVKVKVEKE.

This sequence belongs to the bacterial ribosomal protein bL9 family.

Binds to the 23S rRNA. The chain is Large ribosomal subunit protein bL9 from Coprothermobacter proteolyticus (strain ATCC 35245 / DSM 5265 / OCM 4 / BT).